A 197-amino-acid polypeptide reads, in one-letter code: Ribonuclease HII (197 aa).

An RNase H type-2 domain is found at 11–197 (GRIAGVDEVG…FGPVKRVLGL (187 aa)). Residues D17, E18, and D109 each contribute to the a divalent metal cation site.

This sequence belongs to the RNase HII family. Mn(2+) is required as a cofactor. The cofactor is Mg(2+).

It is found in the cytoplasm. The enzyme catalyses Endonucleolytic cleavage to 5'-phosphomonoester.. Endonuclease that specifically degrades the RNA of RNA-DNA hybrids. In Edwardsiella ictaluri (strain 93-146), this protein is Ribonuclease HII.